The chain runs to 485 residues: Peptidyl-prolyl cis-trans isomerase-like 4 (485 aa).

Residues 1 to 172 form the PPIase cyclophilin-type domain; sequence MSVLLETSAG…IDIRIKHTVI (172 aa). An RRM domain is found at 251–329; it reads NVLFVCKLNP…RRIHVDFSQS (79 aa). Residues 377–485 form a disordered region; sequence NYRMVYGEEE…RDENDRRSRR (109 aa). The span at 426-485 shows a compositional bias: basic and acidic residues; that stretch reads RPRDRSRDRYHKPRDDRRGDRRDRDRRDQDRNRYRDRDHRDRGREKDRYGRDENDRRSRR.

Belongs to the cyclophilin-type PPIase family. PPIL4 subfamily.

It is found in the nucleus. It carries out the reaction [protein]-peptidylproline (omega=180) = [protein]-peptidylproline (omega=0). Functionally, PPIases accelerate the folding of proteins. It catalyzes the cis-trans isomerization of proline imidic peptide bonds in oligopeptides. This Gibberella zeae (strain ATCC MYA-4620 / CBS 123657 / FGSC 9075 / NRRL 31084 / PH-1) (Wheat head blight fungus) protein is Peptidyl-prolyl cis-trans isomerase-like 4 (CYP6).